The primary structure comprises 142 residues: Large ribosomal subunit protein uL13 (142 aa).

It belongs to the universal ribosomal protein uL13 family. As to quaternary structure, part of the 50S ribosomal subunit.

Its function is as follows. This protein is one of the early assembly proteins of the 50S ribosomal subunit, although it is not seen to bind rRNA by itself. It is important during the early stages of 50S assembly. The protein is Large ribosomal subunit protein uL13 of Dictyoglomus thermophilum (strain ATCC 35947 / DSM 3960 / H-6-12).